Consider the following 161-residue polypeptide: Allophycocyanin beta chain (161 aa).

N71 carries the post-translational modification N4-methylasparagine. (2R,3E)-phycocyanobilin is bound at residue C81.

The protein belongs to the phycobiliprotein family. Heterodimer of an alpha and a beta chain. Post-translationally, contains one covalently linked phycocyanobilin chromophore.

The protein resides in the cellular thylakoid membrane. Functionally, light-harvesting photosynthetic bile pigment-protein from the phycobiliprotein complex. Allophycocyanin has a maximum absorption at approximately 650 nanometers. This chain is Allophycocyanin beta chain (apcB), found in Synechococcus sp. (strain ATCC 27144 / PCC 6301 / SAUG 1402/1) (Anacystis nidulans).